Here is a 275-residue protein sequence, read N- to C-terminus: T cell receptor alpha chain MC.7.G5 (275 aa).

The N-terminal stretch at 1 to 21 is a signal peptide; it reads MACPGFLWALVISTCLEFSMA. The Ig-like V-type domain maps to 22-116; the sequence is QTVTQSQPEM…AAMYFCAYRS (95 aa). The t cell receptor alpha variable 38-2DV8 stretch occupies residues 22-116; that stretch reads QTVTQSQPEM…AAMYFCAYRS (95 aa). A disulfide bridge connects residues Cys-43 and Cys-112. A CDR1 region spans residues 47 to 53; sequence TSESDYY. Positions 71–81 are CDR2; sequence QEAYKQQNATE. N-linked (GlcNAc...) asparagine glycosylation occurs at Asn-78. The interval 112–124 is CDR3; that stretch reads CAYRSAVNARLMF. The segment at 119–134 is t cell receptor alpha joining 31; it reads NARLMFGDGTQLVVKP. A t cell receptor alpha constant region spans residues 136–275; the sequence is IQNPDPAVYQ…LLMTLRLWSS (140 aa). The Ig-like C1-type domain occupies 154–242; it reads KSVCLFTDFD…LVEKSFETDT (89 aa). A disulfide bridge links Cys-157 with Cys-207. Residues Asn-167, Asn-201, Asn-212, and Asn-248 are each glycosylated (N-linked (GlcNAc...) asparagine). The segment at 229–250 is connecting peptide; it reads CDVKLVEKSFETDTNLNFQNLS. The chain crosses the membrane as a helical span at residues 251–273; that stretch reads VIGFRILLLKVAGFNLLMTLRLW. Residues 274–275 lie on the Cytoplasmic side of the membrane; sequence SS.

As to quaternary structure, disulfide-linked heterodimer with TRBV25-1*01J2S3*01C2*01 beta chain. The alpha-beta TR associates with the transmembrane signaling CD3 coreceptor proteins to form the TR-CD3 (TCR). The assembly of alpha-beta TR heterodimers with CD3 occurs in the endoplasmic reticulum where a single alpha-beta TR heterodimer associates with one CD3D-CD3E heterodimer, one CD3G-CD3E heterodimer and one CD247 homodimer forming a stable octameric structure. CD3D-CD3E and CD3G-CD3E heterodimers preferentially associate with TR alpha and TR beta chains (via TM domain), respectively. The association of the CD247 homodimer is the last step of TCR assembly in the endoplasmic reticulum and is required for transport to the cell surface. In terms of tissue distribution, expressed in MR1-restricted CD8-positive T cells.

It is found in the cell membrane. The alpha chain of TRAV38-2DV8*01J31*01C*01/TRBV25-1*01J2S3*01C2*01 alpha-beta T cell receptor (TR) clonotype that displays pan-cancer cell recognition via the invariant MR1 molecule. On CD8-positive T cell clone MC.7.G5, likely recognizes tumor-specific or -associated metabolite(s) essential for cancer cell survival, triggering killing of many cancer cell types including lung, melanoma, leukemia, colon, breast, prostate, bone and ovarian cancer cells. Mediates cancer cell cytotoxicity in an HLA-independent manner. Has no reactivity to healthy cells, even stressed or infected by bacteria. Antigen recognition initiates TR-CD3 clustering on the cell surface and intracellular activation of LCK that phosphorylates the ITAM motifs of CD3G, CD3D, CD3E and CD247 enabling the recruitment of ZAP70. In turn, ZAP70 phosphorylates LAT, which recruits numerous signaling molecules to form the LAT signalosome. The LAT signalosome propagates signal branching to three major signaling pathways, the calcium, the mitogen-activated protein kinase (MAPK) kinase and the nuclear factor NF-kappa-B (NF-kB) pathways, leading to the mobilization of transcription factors that are critical for gene expression and essential for T cell differentiation into effector/memory T cells. The polypeptide is T cell receptor alpha chain MC.7.G5 (Homo sapiens (Human)).